A 158-amino-acid chain; its full sequence is Regulator of sigma D (158 aa).

It belongs to the Rsd/AlgQ family. As to quaternary structure, interacts with RpoD.

The protein resides in the cytoplasm. Functionally, binds RpoD and negatively regulates RpoD-mediated transcription activation by preventing the interaction between the primary sigma factor RpoD with the catalytic core of the RNA polymerase and with promoter DNA. May be involved in replacement of the RNA polymerase sigma subunit from RpoD to RpoS during the transition from exponential growth to the stationary phase. The polypeptide is Regulator of sigma D (Escherichia coli (strain UTI89 / UPEC)).